We begin with the raw amino-acid sequence, 343 residues long: Small ribosomal subunit biogenesis GTPase RsgA (343 aa).

Positions 116–275 constitute a CP-type G domain; that stretch reads RGQLKPVAAN…LIDSPGIREF (160 aa). Residues 163 to 166 and 217 to 225 contribute to the GTP site; these read NKAD and GQSGVGKSS. Cys-299, Cys-304, His-306, and Cys-312 together coordinate Zn(2+).

This sequence belongs to the TRAFAC class YlqF/YawG GTPase family. RsgA subfamily. Monomer. Associates with 30S ribosomal subunit, binds 16S rRNA. Requires Zn(2+) as cofactor.

The protein localises to the cytoplasm. One of several proteins that assist in the late maturation steps of the functional core of the 30S ribosomal subunit. Helps release RbfA from mature subunits. May play a role in the assembly of ribosomal proteins into the subunit. Circularly permuted GTPase that catalyzes slow GTP hydrolysis, GTPase activity is stimulated by the 30S ribosomal subunit. This chain is Small ribosomal subunit biogenesis GTPase RsgA, found in Pseudomonas syringae pv. syringae (strain B728a).